Reading from the N-terminus, the 260-residue chain is DNA repair protein RecO (260 aa).

This sequence belongs to the RecO family.

Involved in DNA repair and RecF pathway recombination. In Salinibacter ruber (strain DSM 13855 / M31), this protein is DNA repair protein RecO.